The sequence spans 332 residues: HPr kinase/phosphorylase (332 aa).

Catalysis depends on residues H153 and K174. Residue 168–175 (GKSGLGKS) coordinates ATP. S175 provides a ligand contact to Mg(2+). D192 (proton acceptor; for phosphorylation activity. Proton donor; for dephosphorylation activity) is an active-site residue. Residues 217–226 (MEIRGLGVVD) form an important for the catalytic mechanism of both phosphorylation and dephosphorylation region. Residue E218 coordinates Mg(2+). R259 is an active-site residue. An important for the catalytic mechanism of dephosphorylation region spans residues 280–285 (PIFPGK).

The protein belongs to the HPrK/P family. In terms of assembly, homohexamer. Mg(2+) is required as a cofactor.

The enzyme catalyses [HPr protein]-L-serine + ATP = [HPr protein]-O-phospho-L-serine + ADP + H(+). It carries out the reaction [HPr protein]-O-phospho-L-serine + phosphate + H(+) = [HPr protein]-L-serine + diphosphate. Functionally, catalyzes the ATP- as well as the pyrophosphate-dependent phosphorylation of a specific serine residue in HPr, a phosphocarrier protein of the phosphoenolpyruvate-dependent sugar phosphotransferase system (PTS). HprK/P also catalyzes the pyrophosphate-producing, inorganic phosphate-dependent dephosphorylation (phosphorolysis) of seryl-phosphorylated HPr (P-Ser-HPr). The protein is HPr kinase/phosphorylase of Chlorobium luteolum (strain DSM 273 / BCRC 81028 / 2530) (Pelodictyon luteolum).